Here is a 686-residue protein sequence, read N- to C-terminus: Mitochondrial Rho GTPase 1 (686 aa).

At 1–648 the chain is on the cytoplasmic side; it reads MPRRDLVRIV…PAQRIRVVAR (648 aa). The Miro 1 domain occupies 4 to 172; the sequence is RDLVRIVLVG…FYFAQKAVLH (169 aa). GTP-binding positions include 13-20, 59-63, and 117-120; these read GDDGVGKS, DTSSN, and NKID. EF-hand domains are found at residues 188–223 and 341–376; these read KCLE…CFST and LGNQ…SPGN. 8 residues coordinate Ca(2+): aspartate 201, aspartate 203, aspartate 205, glutamate 212, aspartate 354, aspartate 356, aspartate 358, and glutamate 365. One can recognise a Miro 2 domain in the interval 455 to 624; the sequence is RNVFLCYVLG…WVAITRVALD (170 aa). Residues 464–471, 506–510, and 574–577 each bind GTP; these read GATGSGKT, EMEGV, and TKSD. A helical; Anchor for type IV membrane protein membrane pass occupies residues 649 to 665; it reads WGLAATTISAIVAVWMK. Residues 666 to 686 are Mitochondrial intermembrane-facing; the sequence is WQGYSFKGIWGWMAKFAGLRT.

This sequence belongs to the mitochondrial Rho GTPase family.

It is found in the mitochondrion outer membrane. In terms of biological role, mitochondrial GTPase involved in mitochondrial trafficking. Probably involved in control of anterograde transport of mitochondria and their subcellular distribution. The protein is Mitochondrial Rho GTPase 1 (GEM1) of Cryptococcus neoformans var. neoformans serotype D (strain B-3501A) (Filobasidiella neoformans).